The following is a 582-amino-acid chain: tRNA(Ile)-lysidine synthase (582 aa).

46-51 (SGGADS) lines the ATP pocket. Residues 402–525 (DPLHAAMGEA…DLLADHWGWR (124 aa)) enclose the CMP/dCMP-type deaminase domain. Residues 548-582 (VRRRSADTPQTPNAETPAPRSSRSTSASGKPTMLE) form a disordered region. Residues 563–575 (TPAPRSSRSTSAS) show a composition bias toward low complexity.

The protein belongs to the tRNA(Ile)-lysidine synthase family.

Its subcellular location is the cytoplasm. It carries out the reaction cytidine(34) in tRNA(Ile2) + L-lysine + ATP = lysidine(34) in tRNA(Ile2) + AMP + diphosphate + H(+). Ligates lysine onto the cytidine present at position 34 of the AUA codon-specific tRNA(Ile) that contains the anticodon CAU, in an ATP-dependent manner. Cytidine is converted to lysidine, thus changing the amino acid specificity of the tRNA from methionine to isoleucine. The sequence is that of tRNA(Ile)-lysidine synthase from Deinococcus radiodurans (strain ATCC 13939 / DSM 20539 / JCM 16871 / CCUG 27074 / LMG 4051 / NBRC 15346 / NCIMB 9279 / VKM B-1422 / R1).